Consider the following 490-residue polypeptide: Alpha-galactosidase (490 aa).

Residue 4–70 (FKIAIIGAGS…LPTRVTATTD (67 aa)) participates in NAD(+) binding. Asn150 provides a ligand contact to substrate. Cys171 lines the Mn(2+) pocket. The Proton donor role is filled by His172. Mn(2+) is bound at residue His201. The active-site Proton acceptor is the Tyr258.

The protein belongs to the glycosyl hydrolase 4 family. As to quaternary structure, homodimer. The cofactor is Mn(2+). NAD(+) is required as a cofactor.

The enzyme catalyses Hydrolysis of terminal, non-reducing alpha-D-galactose residues in alpha-D-galactosides, including galactose oligosaccharides, galactomannans and galactolipids.. This Rhizobium meliloti (strain 1021) (Ensifer meliloti) protein is Alpha-galactosidase (melA).